Consider the following 256-residue polypeptide: Probable ribosomal RNA small subunit methyltransferase A (256 aa).

The S-adenosyl-L-methionine site is built by His8, Leu10, Gly34, Glu55, Asp83, and Asn98.

It belongs to the class I-like SAM-binding methyltransferase superfamily. rRNA adenine N(6)-methyltransferase family. RsmA subfamily.

The protein resides in the cytoplasm. Specifically dimethylates two adjacent adenosines in the loop of a conserved hairpin near the 3'-end of 16S rRNA in the 30S particle. May play a critical role in biogenesis of 30S subunits. This is Probable ribosomal RNA small subunit methyltransferase A from Methanospirillum hungatei JF-1 (strain ATCC 27890 / DSM 864 / NBRC 100397 / JF-1).